The primary structure comprises 274 residues: 5'-nucleotidase SurE (274 aa).

4 residues coordinate a divalent metal cation: Asp-12, Asp-13, Ser-45, and Asn-103.

This sequence belongs to the SurE nucleotidase family. A divalent metal cation is required as a cofactor.

It localises to the cytoplasm. The catalysed reaction is a ribonucleoside 5'-phosphate + H2O = a ribonucleoside + phosphate. In terms of biological role, nucleotidase that shows phosphatase activity on nucleoside 5'-monophosphates. The polypeptide is 5'-nucleotidase SurE (Chlamydia felis (strain Fe/C-56) (Chlamydophila felis)).